A 108-amino-acid chain; its full sequence is SPbeta prophage-derived uncharacterized HTH-type transcriptional regulator YonR (108 aa).

The region spanning 6 to 60 is the HTH cro/C1-type domain; the sequence is LKKCRTSKGYSQQRMADFLGITRQGYGKYEIGKAEPDLKTLTKLSNILGVSTDFL. Residues 17–36 constitute a DNA-binding region (H-T-H motif); it reads QQRMADFLGITRQGYGKYEI.

This is SPbeta prophage-derived uncharacterized HTH-type transcriptional regulator YonR (yonR) from Bacillus subtilis (strain 168).